We begin with the raw amino-acid sequence, 203 residues long: UPF0637 protein EF_3078 (203 aa).

This sequence belongs to the UPF0637 family.

The chain is UPF0637 protein EF_3078 from Enterococcus faecalis (strain ATCC 700802 / V583).